A 288-amino-acid polypeptide reads, in one-letter code: Aquaporin PIP 1-3 (288 aa).

Residues 1 to 30 are disordered; sequence MEGKEEDVRLGANRYTERQPIGTAAQGAEE. 2 helical membrane-spanning segments follow: residues 57 to 77 and 92 to 114; these read IAEF…VMGV and IAWS…SGGH. The NPA 1 signature appears at 116–118; it reads NPA. 3 helical membrane passes run 135 to 155, 177 to 197, and 211 to 231; these read VFYM…VKGF, GDGL…VFSA, and ILAP…TIPI. The NPA 2 motif lies at 237-239; sequence NPA. The chain crosses the membrane as a helical span at residues 259 to 279; it reads IFWVGPFIGAALAAIYHVVVI.

It belongs to the MIP/aquaporin (TC 1.A.8) family. PIP (TC 1.A.8.11) subfamily. In terms of tissue distribution, expressed in roots and leaves.

It localises to the cell membrane. Its function is as follows. Water channel required to facilitate the transport of water across cell membrane. Increases the capacity for root water uptake under water deficit. May play a role in drought avoidance in upland rice. The protein is Aquaporin PIP 1-3 (PIP1-3) of Oryza sativa subsp. japonica (Rice).